A 124-amino-acid polypeptide reads, in one-letter code: Acidic phospholipase A2 (124 aa).

Intrachain disulfides connect Cys-26-Cys-116, Cys-28-Cys-44, Cys-43-Cys-95, Cys-49-Cys-124, Cys-50-Cys-88, Cys-57-Cys-81, and Cys-75-Cys-86. Residues Tyr-27, Gly-29, and Gly-31 each contribute to the Ca(2+) site. His-47 is an active-site residue. Asp-48 contacts Ca(2+). Asp-89 is a catalytic residue.

Belongs to the phospholipase A2 family. Group II subfamily. D49 sub-subfamily. Ca(2+) is required as a cofactor. Expressed by the venom gland.

The protein resides in the secreted. The enzyme catalyses a 1,2-diacyl-sn-glycero-3-phosphocholine + H2O = a 1-acyl-sn-glycero-3-phosphocholine + a fatty acid + H(+). Snake venom phospholipase A2 (PLA2) that inhibits ADP-induced platelet aggregation. PLA2 catalyzes the calcium-dependent hydrolysis of the 2-acyl groups in 3-sn-phosphoglycerides. The sequence is that of Acidic phospholipase A2 from Gloydius ussuriensis (Ussuri mamushi).